The chain runs to 209 residues: Molybdenum cofactor guanylyltransferase (209 aa).

GTP-binding positions include Leu16–Gly18, Lys28, Asn56, Asp69, and Asp103. Mg(2+) is bound at residue Asp103.

This sequence belongs to the MobA family. Monomer. Mg(2+) serves as cofactor.

It is found in the cytoplasm. It carries out the reaction Mo-molybdopterin + GTP + H(+) = Mo-molybdopterin guanine dinucleotide + diphosphate. Transfers a GMP moiety from GTP to Mo-molybdopterin (Mo-MPT) cofactor (Moco or molybdenum cofactor) to form Mo-molybdopterin guanine dinucleotide (Mo-MGD) cofactor. The protein is Molybdenum cofactor guanylyltransferase of Rhizobium johnstonii (strain DSM 114642 / LMG 32736 / 3841) (Rhizobium leguminosarum bv. viciae).